Here is a 94-residue protein sequence, read N- to C-terminus: Protein canopy homolog 1 (94 aa).

It belongs to the canopy family.

This is Protein canopy homolog 1 (Cnpy1) from Mus musculus (Mouse).